A 153-amino-acid chain; its full sequence is Agglutinin (153 aa).

Residues 22 to 25 and asparagine 46 each bind beta-D-galactosyl-(1-&gt;3)-N-acetyl-D-galactosamine; that span reads NAWE. The region spanning 58–153 is the Ricin B-type lectin domain; sequence GDSAEYLIIN…DNQKWYFDAK (96 aa).

Homodimer.

Its function is as follows. Lectin that primarily recognizes glycans with a non-reducing terminal N-acetylgalactosamine (GalNAc), with a preference for the alpha- over the beta-anomer. Can also bind non-reducing terminal galactose (Gal) residues but with a lower affinity. Strongly interacts with glycolipid type glycans with terminal non-reducing Gal or GalNAc but fails to bind sialylated or fucosylated forms of the same glycans. Strongly interacts with galactosylated N-glycans, displaying highest affinity for alpha-1-3 branched mono-antennary N-glycans but also binding to multi-antennary glycans. The polypeptide is Agglutinin (Sclerotinia sclerotiorum (strain ATCC 18683 / 1980 / Ss-1) (White mold)).